The sequence spans 478 residues: 3-isopropylmalate dehydratase large subunit (478 aa).

Residues Cys-347, Cys-407, and Cys-410 each coordinate [4Fe-4S] cluster.

This sequence belongs to the aconitase/IPM isomerase family. LeuC type 1 subfamily. Heterodimer of LeuC and LeuD. [4Fe-4S] cluster serves as cofactor.

The catalysed reaction is (2R,3S)-3-isopropylmalate = (2S)-2-isopropylmalate. Its pathway is amino-acid biosynthesis; L-leucine biosynthesis; L-leucine from 3-methyl-2-oxobutanoate: step 2/4. Its function is as follows. Catalyzes the isomerization between 2-isopropylmalate and 3-isopropylmalate, via the formation of 2-isopropylmaleate. The sequence is that of 3-isopropylmalate dehydratase large subunit from Prochlorococcus marinus (strain MIT 9303).